Consider the following 1084-residue polypeptide: MSDSEDSDFSDNQSERSSEAEEVEENEEEEEQGSVAGSDKAEEEGEDLEDEEEYDEEEEEDDDRPRKKARHGGFILDEADVDDEYEDEDPWEDGAEDILEKEEAEVSNLDHVVLDEDHSGSRRLQNLWRDSREEALGEYYMRKYAKSSGGEHFYGGSEDLSDDITQQQLLPGVKDPNLWTVKCKIGEERATAISLMRKFVAYQCTDTPLQIKSVVAPEHVKGYIYVEAYKQTHVKAAIEGVGNLRMGFWNQQMVPIKEMTDVLKVVKEVTNLKPKSWVRLKRGLYKDDIAQVDYVEPSQNTISLKMIPRIDLDRIKARMSMKDWFAKRKKFKRPPQRLFDAEKIRSLGGEVSHDGDFMIFEANRYSRKGFLFKSFAMSAVITEGVKPTLSELEKFEDQPEGIDLEVVTETTGKEREHNLQAGDNVEVCEGELINLQGKILSVDGNKITIMPKHEDLKDPLEFPAHELRKYFRMGDHVKVIAGRYEGDTGLIVRVEENFVILFSDLTMHELKVLPRDLQLCSETASGVDAGGQHEWGELVQLDPQTVGVIVRLERETFQVLNMHGKVLTVRHQAVNRRKDNRFAVALDSEQNNIHVKDIVKVIDGPHSGREGEIRHIFRGFAFLHCKKLVENGGMFVCKARHLVLAGGSKPRDVTNFTVGGFAPMSPRISSPMHPGGGGQPQRGGGGGGGGGMGRGRGRRDNDLIGQTVRISQGPYKGYIGVVKDATESTARVELHSTCQTISVDRQRLTTVGGKERQGRSSTHLRTPMYGSQTPIYGTGSRTPMYGSQTPLHDGSRTPHYGSQTPLHDGSRTPGQSGAWDPNNPNTPSRPDDEYEFAYDDEPSPSPQGYGGTPNPQTPGYPEVPSPQVNPQYNPQTPGTPAMYNTDQYSPYAAPSPQGSYQPSPSPQSYHQVAPSPVGYQNTHSPASYHPTPSPMAYQASPSPSPVGYSPMTPGAPSPGGYNPHTPGSNIDQASNDWVTTDIMVRVKDTFLDGGVINQTGIIRSVTGGMCSVFLQDTEKVVSISSEHLEPVTPTKNNKVKVILGEDREATGVLLSIDGEDGIVRMELDEQLKILNLRFLGKLEV.

The disordered stretch occupies residues 1 to 91 (MSDSEDSDFS…DDEYEDEDPW (91 aa)). Acidic residues-rich tracts occupy residues 20 to 32 (AEEV…EEEQ), 41 to 62 (AEEE…EEDD), and 77 to 91 (DEAD…EDPW). The segment at 175–269 (DPNLWTVKCK…TDVLKVVKEV (95 aa)) is interaction with SUPT4H1. KOW domains are found at residues 272–305 (LKPK…ISLK), 419–450 (LQAG…ITIM), 471–502 (FRMG…VILF), and 593–626 (IHVK…LHCK). The interaction with RNA polymerase II stretch occupies residues 312-419 (LDRIKARMSM…TTGKEREHNL (108 aa)). Phosphoserine is present on Ser-665. Residues 667–700 (RISSPMHPGGGGQPQRGGGGGGGGGMGRGRGRRD) form a disordered region. Over residues 674 to 694 (PGGGGQPQRGGGGGGGGGMGR) the composition is skewed to gly residues. The KOW 5 domain maps to 702 to 735 (DLIGQTVRISQGPYKGYIGVVKDATESTARVELH). The interval 748–973 (LTTVGGKERQ…HTPGSNIDQA (226 aa)) is disordered. The CTR1-1; approximate repeat unit spans residues 758-763 (GRSSTH). The tract at residues 758-815 (GRSSTHLRTPMYGSQTPIYGTGSRTPMYGSQTPLHDGSRTPHYGSQTPLHDGSRTPGQ) is 8 X 7 AA approximate tandem repeats of G-S-[QR]-T-P-X-[YQ], motif CTR1. Positions 759-790 (RSSTHLRTPMYGSQTPIYGTGSRTPMYGSQTP) are enriched in polar residues. The CTR1-2; approximate repeat unit spans residues 764 to 769 (LRTPMY). The stretch at 770–776 (GSQTPIY) is one CTR1-3 repeat. Thr-773 and Thr-782 each carry phosphothreonine; by CDK9. A CTR1-4 repeat occupies 779 to 785 (GSRTPMY). Residues 786–792 (GSQTPLH) form a CTR1-5 repeat. A CTR1-6 repeat occupies 794-800 (GSRTPHY). One copy of the CTR1-7 repeat lies at 801 to 807 (GSQTPLH). The stretch at 809–815 (GSRTPGQ) is one CTR1-8 repeat. Residues 832-842 (DEYEFAYDDEP) are compositionally biased toward acidic residues. A CTR2-1 repeat occupies 842–849 (PSPSPQGY). The tract at residues 842–948 (PSPSPQGYGG…ASPSPSPVGY (107 aa)) is 10 X 8 AA approximate tandem repeats of P-[TS]-P-S-P-[QA]-[SG]-Y, motif CTR2. One copy of the CTR2-2; approximate repeat lies at 852-860 (TPNPQTPGY). Pro residues predominate over residues 855–864 (PQTPGYPEVP). A CTR2-3; approximate repeat occupies 861-867 (PEVPSPQ). Residues 866-888 (PQVNPQYNPQTPGTPAMYNTDQY) are compositionally biased toward polar residues. One copy of the CTR2-4; half-length repeat lies at 879–883 (TPAMY). A CTR2-5; approximate repeat occupies 894 to 900 (PSPQGSY). Residues 894–909 (PSPQGSYQPSPSPQSY) show a composition bias toward low complexity. One copy of the CTR2-6 repeat lies at 902 to 909 (PSPSPQSY). The stretch at 914–919 (PSPVGY) is one CTR2-7; approximate repeat. Residues 922 to 928 (THSPASY) form a CTR2-8 repeat. A CTR2-9 repeat occupies 930–937 (PTPSPMAY). The CTR2-10 repeat unit spans residues 941-948 (PSPSPVGY).

The protein belongs to the SPT5 family. In terms of assembly, interacts with SUPT4H1 to form the DSIF complex. DSIF interacts with RNA polymerase II and with the positive transcription elongation factor b complex (P-TEFb complex), which is composed of CDK9 and cyclin-T. In terms of processing, phosphorylated. Phosphorylation by P-TEFb (CDK9) at Thr residues of the C-terminal repeats alleviates transcriptional pausing and promotes transcription elongation.

It is found in the nucleus. Functionally, component of the DRB sensitivity-inducing factor complex (DSIF complex), which regulates mRNA processing and transcription elongation by RNA polymerase II. DSIF positively regulates mRNA capping by stimulating the mRNA guanylyltransferase activity of RNGTT/CAP1A. DSIF also acts cooperatively with the negative elongation factor complex (NELF complex) to enhance transcriptional pausing at sites proximal to the promoter. Transcriptional pausing may facilitate the assembly of an elongation competent RNA polymerase II complex. DSIF and NELF promote pausing by inhibition of the transcription elongation factor TFIIS/S-II. TFIIS/S-II binds to RNA polymerase II at transcription pause sites and stimulates the weak intrinsic nuclease activity of the enzyme. Cleavage of blocked transcripts by RNA polymerase II promotes the resumption of transcription from the new 3' terminus and may allow repeated attempts at transcription through natural pause sites. Following phosphorylation by CDK9, DSIF can also positively regulate transcriptional elongation. Regulation of transcriptional elongation by this protein is required for the expression of genes which control neuronal development. The sequence is that of Transcription elongation factor SPT5 (supt5h) from Danio rerio (Zebrafish).